Here is a 612-residue protein sequence, read N- to C-terminus: Kelch repeat and BTB domain-containing protein 3 (612 aa).

Residues 52–119 (YDFKIIMKDE…AYTGKTKITD (68 aa)) enclose the BTB domain. Residues 154 to 254 (CLQLLSISDS…QLSEETLQDC (101 aa)) form the BACK domain. Kelch repeat units follow at residues 295–341 (KYIF…SSYG), 343–403 (KIFL…MALD), 404–454 (RLFV…TCQN), 456–506 (IYVL…KAVP), and 552–599 (KIYI…VIQF).

The chain is Kelch repeat and BTB domain-containing protein 3 from Homo sapiens (Human).